A 228-amino-acid chain; its full sequence is Pyridoxal phosphate homeostasis protein (228 aa).

K35 is modified (N6-(pyridoxal phosphate)lysine).

The protein belongs to the pyridoxal phosphate-binding protein YggS/PROSC family.

Its function is as follows. Pyridoxal 5'-phosphate (PLP)-binding protein, which is involved in PLP homeostasis. The protein is Pyridoxal phosphate homeostasis protein of Aquifex aeolicus (strain VF5).